Reading from the N-terminus, the 433-residue chain is Shikimate O-hydroxycinnamoyltransferase (433 aa).

The active-site Proton acceptor is H153. Residues 252 to 255 (SSYE), 284 to 290 (DGRSRLR), and 370 to 373 (SWVR) each bind 4-coumaroyl-CoA. Catalysis depends on D380, which acts as the Proton acceptor.

This sequence belongs to the plant acyltransferase family.

The enzyme catalyses shikimate + 4-coumaroyl-CoA = trans-4-coumaroylshikimate + CoA. Acyltransferase involved in the biosynthesis of lignin. Accepts caffeoyl-CoA and p-coumaroyl-CoA as substrates and transfers the acyl group on both shikimate and quinate acceptors. In Arabidopsis thaliana (Mouse-ear cress), this protein is Shikimate O-hydroxycinnamoyltransferase (HST).